A 248-amino-acid chain; its full sequence is Ubiquinone biosynthesis O-methyltransferase (248 aa).

Residues R40, G71, D92, and M135 each contribute to the S-adenosyl-L-methionine site.

Belongs to the methyltransferase superfamily. UbiG/COQ3 family.

The enzyme catalyses a 3-demethylubiquinol + S-adenosyl-L-methionine = a ubiquinol + S-adenosyl-L-homocysteine + H(+). It catalyses the reaction a 3-(all-trans-polyprenyl)benzene-1,2-diol + S-adenosyl-L-methionine = a 2-methoxy-6-(all-trans-polyprenyl)phenol + S-adenosyl-L-homocysteine + H(+). It participates in cofactor biosynthesis; ubiquinone biosynthesis. O-methyltransferase that catalyzes the 2 O-methylation steps in the ubiquinone biosynthetic pathway. The sequence is that of Ubiquinone biosynthesis O-methyltransferase from Ruegeria pomeroyi (strain ATCC 700808 / DSM 15171 / DSS-3) (Silicibacter pomeroyi).